The sequence spans 463 residues: L-seryl-tRNA(Sec) selenium transferase (463 aa).

Lys-295 carries the post-translational modification N6-(pyridoxal phosphate)lysine.

Belongs to the SelA family. Homodecamer; pentamer of dimers. Binds only one seryl-tRNA(Sec) per dimer. Pyridoxal 5'-phosphate serves as cofactor.

It localises to the cytoplasm. It carries out the reaction L-seryl-tRNA(Sec) + selenophosphate + H(+) = L-selenocysteinyl-tRNA(Sec) + phosphate. The protein operates within aminoacyl-tRNA biosynthesis; selenocysteinyl-tRNA(Sec) biosynthesis; selenocysteinyl-tRNA(Sec) from L-seryl-tRNA(Sec) (bacterial route): step 1/1. Its function is as follows. Converts seryl-tRNA(Sec) to selenocysteinyl-tRNA(Sec) required for selenoprotein biosynthesis. The protein is L-seryl-tRNA(Sec) selenium transferase of Salmonella arizonae (strain ATCC BAA-731 / CDC346-86 / RSK2980).